We begin with the raw amino-acid sequence, 212 residues long: ATP phosphoribosyltransferase (212 aa).

This sequence belongs to the ATP phosphoribosyltransferase family. Short subfamily. As to quaternary structure, heteromultimer composed of HisG and HisZ subunits.

The protein resides in the cytoplasm. It catalyses the reaction 1-(5-phospho-beta-D-ribosyl)-ATP + diphosphate = 5-phospho-alpha-D-ribose 1-diphosphate + ATP. The protein operates within amino-acid biosynthesis; L-histidine biosynthesis; L-histidine from 5-phospho-alpha-D-ribose 1-diphosphate: step 1/9. Functionally, catalyzes the condensation of ATP and 5-phosphoribose 1-diphosphate to form N'-(5'-phosphoribosyl)-ATP (PR-ATP). Has a crucial role in the pathway because the rate of histidine biosynthesis seems to be controlled primarily by regulation of HisG enzymatic activity. The sequence is that of ATP phosphoribosyltransferase from Prochlorococcus marinus (strain MIT 9515).